The primary structure comprises 1191 residues: Rho GTPase-activating protein 20 (1191 aa).

Positions 1–23 (MEAMSPQQETLGGQPGRSSSLTG) are enriched in polar residues. The disordered stretch occupies residues 1 to 45 (MEAMSPQQETLGGQPGRSSSLTGVSRLAGGSCTKKKMKTLAERRR). Ser-46 carries the phosphoserine modification. Residues 78 to 180 (SLVCSNRTLL…EQKDKWLSLL (103 aa)) form the PH domain. In terms of domain architecture, Ras-associating spans 194–295 (KSIPLKIFAK…TPFNLQEPFL (102 aa)). One can recognise a Rho-GAP domain in the interval 365–551 (ISLPNICEND…FLIENCLRIF (187 aa)). Residues Ser-704 and Ser-730 each carry the phosphoserine modification. Disordered stretches follow at residues 768–791 (SKKNATTQNTKKKSLSGSEGNHVK), 926–1014 (RLNL…SRPA), 1052–1123 (KKAK…RHCS), and 1140–1191 (HEEI…TKDI). The segment covering 934 to 961 (SYSSLSSPGTSPSGSSVSSQDSAFSQIS) has biased composition (low complexity). Polar residues-rich tracts occupy residues 962-981 (EHSVFTPTETSSPIDCTFQA) and 1103-1116 (PVQSAQRCSSSPFQ). Basic and acidic residues predominate over residues 1182 to 1191 (IEDRYLTKDI).

In terms of tissue distribution, expressed predominantly in the brain. Lower expression is found in lymph nodes.

Functionally, GTPase activator for the Rho-type GTPases by converting them to an inactive GDP-bound state. The chain is Rho GTPase-activating protein 20 (ARHGAP20) from Homo sapiens (Human).